A 258-amino-acid chain; its full sequence is UPF0246 protein CGSHiGG_08495 (258 aa).

It belongs to the UPF0246 family.

This chain is UPF0246 protein CGSHiGG_08495, found in Haemophilus influenzae (strain PittGG).